We begin with the raw amino-acid sequence, 105 residues long: CRISPR-associated endoribonuclease Cas2 1 (105 aa).

Asp20 is a binding site for Mg(2+).

Belongs to the CRISPR-associated endoribonuclease Cas2 protein family. Homodimer, forms a heterotetramer with a Cas1 homodimer. Mg(2+) serves as cofactor.

CRISPR (clustered regularly interspaced short palindromic repeat), is an adaptive immune system that provides protection against mobile genetic elements (viruses, transposable elements and conjugative plasmids). CRISPR clusters contain sequences complementary to antecedent mobile elements and target invading nucleic acids. CRISPR clusters are transcribed and processed into CRISPR RNA (crRNA). Functions as a ssRNA-specific endoribonuclease. Involved in the integration of spacer DNA into the CRISPR cassette. The chain is CRISPR-associated endoribonuclease Cas2 1 (cas21) from Nitrosomonas europaea (strain ATCC 19718 / CIP 103999 / KCTC 2705 / NBRC 14298).